The following is a 423-amino-acid chain: UDP-N-acetylglucosamine 1-carboxyvinyltransferase 1 (423 aa).

Phosphoenolpyruvate is bound at residue 23-24 (KN). Position 96 (Arg-96) interacts with UDP-N-acetyl-alpha-D-glucosamine. Catalysis depends on Cys-120, which acts as the Proton donor. 2-(S-cysteinyl)pyruvic acid O-phosphothioketal is present on Cys-120. Residues 125–129 (RPIDL), Asp-309, and Val-331 contribute to the UDP-N-acetyl-alpha-D-glucosamine site.

The protein belongs to the EPSP synthase family. MurA subfamily.

The protein localises to the cytoplasm. The catalysed reaction is phosphoenolpyruvate + UDP-N-acetyl-alpha-D-glucosamine = UDP-N-acetyl-3-O-(1-carboxyvinyl)-alpha-D-glucosamine + phosphate. The protein operates within cell wall biogenesis; peptidoglycan biosynthesis. Cell wall formation. Adds enolpyruvyl to UDP-N-acetylglucosamine. The sequence is that of UDP-N-acetylglucosamine 1-carboxyvinyltransferase 1 from Streptococcus thermophilus (strain CNRZ 1066).